We begin with the raw amino-acid sequence, 360 residues long: Ferredoxin--NADP reductase 1 (360 aa).

Residues Asp43, Gln51, Tyr56, Ala96, Phe141, Asp307, and Ser348 each contribute to the FAD site.

This sequence belongs to the ferredoxin--NADP reductase type 2 family. In terms of assembly, homodimer. The cofactor is FAD.

The catalysed reaction is 2 reduced [2Fe-2S]-[ferredoxin] + NADP(+) + H(+) = 2 oxidized [2Fe-2S]-[ferredoxin] + NADPH. The sequence is that of Ferredoxin--NADP reductase 1 from Cupriavidus taiwanensis (strain DSM 17343 / BCRC 17206 / CCUG 44338 / CIP 107171 / LMG 19424 / R1) (Ralstonia taiwanensis (strain LMG 19424)).